Consider the following 618-residue polypeptide: Phosphoenolpyruvate carboxykinase [GTP] (618 aa).

Substrate-binding positions include R83 and 217–219 (YGG). K226 and H245 together coordinate Mn(2+). Position 267 (S267) interacts with substrate. 268-273 (MCGKTS) contributes to the GTP binding site. Residue C269 is part of the active site. D286 is a binding site for Mn(2+). Residue 381–383 (NAR) participates in substrate binding. R383 and R415 together coordinate GTP.

It belongs to the phosphoenolpyruvate carboxykinase [GTP] family. The cofactor is Mn(2+).

Its subcellular location is the cytoplasm. The catalysed reaction is oxaloacetate + GTP = phosphoenolpyruvate + GDP + CO2. The protein operates within carbohydrate biosynthesis; gluconeogenesis. In terms of biological role, catalyzes the conversion of oxaloacetate (OAA) to phosphoenolpyruvate (PEP), the rate-limiting step in the metabolic pathway that produces glucose from lactate and other precursors derived from the citric acid cycle. This is Phosphoenolpyruvate carboxykinase [GTP] from Pyrococcus abyssi (strain GE5 / Orsay).